A 623-amino-acid chain; its full sequence is Aspartate--tRNA(Asp/Asn) ligase (623 aa).

Glu175 contacts L-aspartate. Residues 199-202 (QQYK) are aspartate. The L-aspartate site is built by Arg221 and His483. 221–223 (RDE) is an ATP binding site. Glu517 is an ATP binding site. An L-aspartate-binding site is contributed by Arg524. 569 to 572 (GVDR) lines the ATP pocket.

The protein belongs to the class-II aminoacyl-tRNA synthetase family. Type 1 subfamily. As to quaternary structure, homodimer.

It is found in the cytoplasm. The enzyme catalyses tRNA(Asx) + L-aspartate + ATP = L-aspartyl-tRNA(Asx) + AMP + diphosphate. Functionally, aspartyl-tRNA synthetase with relaxed tRNA specificity since it is able to aspartylate not only its cognate tRNA(Asp) but also tRNA(Asn). Reaction proceeds in two steps: L-aspartate is first activated by ATP to form Asp-AMP and then transferred to the acceptor end of tRNA(Asp/Asn). In Xanthobacter autotrophicus (strain ATCC BAA-1158 / Py2), this protein is Aspartate--tRNA(Asp/Asn) ligase.